A 460-amino-acid polypeptide reads, in one-letter code: tRNA (guanine(10)-N(2))-methyltransferase TRMT11 (460 aa).

An N-acetylalanine modification is found at Ala-2.

Belongs to the class I-like SAM-binding methyltransferase superfamily. TRM11 methyltransferase family. Part of the heterodimeric TRMT11-TRM112 methyltransferase complex; this complex forms an active tRNA methyltransferase, where TRMT112 acts as an activator of the catalytic subunit TRMT11.

It is found in the cytoplasm. The catalysed reaction is guanosine(10) in tRNA + S-adenosyl-L-methionine = N(2)-methylguanosine(10) in tRNA + S-adenosyl-L-homocysteine + H(+). In terms of biological role, catalytic subunit of the TRMT11-TRM112 methyltransferase complex, that specifically mediates the S-adenosyl-L-methionine-dependent N(2)-methylation of guanosine nucleotide at position 10 (m2G10) in tRNAs. This is one of the major tRNA (guanine-N(2))-methyltransferases. The protein is tRNA (guanine(10)-N(2))-methyltransferase TRMT11 of Mus musculus (Mouse).